The chain runs to 109 residues: Phosphoribosyl-ATP pyrophosphatase (109 aa).

This sequence belongs to the PRA-PH family.

The protein resides in the cytoplasm. The catalysed reaction is 1-(5-phospho-beta-D-ribosyl)-ATP + H2O = 1-(5-phospho-beta-D-ribosyl)-5'-AMP + diphosphate + H(+). It functions in the pathway amino-acid biosynthesis; L-histidine biosynthesis; L-histidine from 5-phospho-alpha-D-ribose 1-diphosphate: step 2/9. In Marinobacter nauticus (strain ATCC 700491 / DSM 11845 / VT8) (Marinobacter aquaeolei), this protein is Phosphoribosyl-ATP pyrophosphatase.